Reading from the N-terminus, the 320-residue chain is Glutaminyl-peptide cyclotransferase (320 aa).

Residues 1-12 (MATRSPYKRQTK) show a composition bias toward basic residues. The interval 1–22 (MATRSPYKRQTKRSMIQSLPAS) is disordered. Over 1–36 (MATRSPYKRQTKRSMIQSLPASSSASSRRRFISRKR) the chain is Cytoplasmic. Residues 37 to 57 (FAMMIPLALLSGAVFLFFMPF) form a helical; Signal-anchor for type II membrane protein membrane-spanning segment. Residues 58-320 (NSWGQSSGSS…GNYIEQQCLV (263 aa)) lie on the Lumenal side of the membrane. Asn-99 and Asn-163 each carry an N-linked (GlcNAc...) asparagine glycan.

This sequence belongs to the plant glutaminyl-peptide cyclotransferase family. Post-translationally, glycosylated.

Its subcellular location is the endoplasmic reticulum membrane. It catalyses the reaction N-terminal L-glutaminyl-[peptide] = N-terminal 5-oxo-L-prolyl-[peptide] + NH4(+). Functionally, converts glutamine and N-terminal glutamyl residues in peptides to 5-oxoproline and 5-oxoproline residues. Not involved in the major pathway for 5-oxoproline production. This chain is Glutaminyl-peptide cyclotransferase (QCT), found in Arabidopsis thaliana (Mouse-ear cress).